Consider the following 316-residue polypeptide: Cation efflux system protein CzcD (316 aa).

Transmembrane regions (helical) follow at residues 17-37, 47-67, 82-102, 115-135, 152-172, and 174-194; these read LKIA…GGVM, AAHM…IAIA, FEIL…IYIL, IEST…LISM, YLEV…AIII, and FTGW…WVLP.

It belongs to the cation diffusion facilitator (CDF) transporter (TC 2.A.4) family. SLC30A subfamily.

The protein localises to the cell membrane. In terms of biological role, necessary for activation of the czc determinant. The polypeptide is Cation efflux system protein CzcD (czcD) (Alcaligenes sp. (strain CT14)).